Reading from the N-terminus, the 200-residue chain is 3-isopropylmalate dehydratase small subunit (200 aa).

Belongs to the LeuD family. LeuD type 1 subfamily. Heterodimer of LeuC and LeuD.

The enzyme catalyses (2R,3S)-3-isopropylmalate = (2S)-2-isopropylmalate. It participates in amino-acid biosynthesis; L-leucine biosynthesis; L-leucine from 3-methyl-2-oxobutanoate: step 2/4. In terms of biological role, catalyzes the isomerization between 2-isopropylmalate and 3-isopropylmalate, via the formation of 2-isopropylmaleate. This is 3-isopropylmalate dehydratase small subunit from Yersinia pseudotuberculosis serotype I (strain IP32953).